Here is a 1486-residue protein sequence, read N- to C-terminus: Chromosome partition protein MukB (1486 aa).

Residue 34-41 (GGNGAGKS) coordinates ATP. 3 coiled-coil regions span residues 334–418 (SDHL…QYNQ), 444–480 (LETF…QAYQ), and 509–603 (RHLA…RAPV). Positions 666–783 (PGGSEDQRLN…EVPLFGRAAR (118 aa)) are flexible hinge. 3 coiled-coil regions span residues 835–923 (EAEI…AKLE), 977–1115 (EMLS…TAKA), and 1209–1266 (VEAI…QNVS).

The protein belongs to the SMC family. MukB subfamily. Homodimerization via its hinge domain. Binds to DNA via its C-terminal region. Interacts, and probably forms a ternary complex, with MukE and MukF via its C-terminal region. The complex formation is stimulated by calcium or magnesium. Interacts with tubulin-related protein FtsZ.

The protein localises to the cytoplasm. It is found in the nucleoid. Plays a central role in chromosome condensation, segregation and cell cycle progression. Functions as a homodimer, which is essential for chromosome partition. Involved in negative DNA supercoiling in vivo, and by this means organize and compact chromosomes. May achieve or facilitate chromosome segregation by condensation DNA from both sides of a centrally located replisome during cell division. This chain is Chromosome partition protein MukB, found in Shigella sonnei (strain Ss046).